A 50-amino-acid chain; its full sequence is Protein PsbN (50 aa).

Residues 14-34 traverse the membrane as a helical segment; the sequence is VAVTILAILLALTGFGLWTAF.

This sequence belongs to the PsbN family.

The protein localises to the cellular thylakoid membrane. May play a role in photosystem I and II biogenesis. This Prochlorococcus marinus (strain MIT 9312) protein is Protein PsbN.